The following is a 110-amino-acid chain: Integration host factor subunit alpha (110 aa).

This sequence belongs to the bacterial histone-like protein family. In terms of assembly, heterodimer of an alpha and a beta chain.

In terms of biological role, this protein is one of the two subunits of integration host factor, a specific DNA-binding protein that functions in genetic recombination as well as in transcriptional and translational control. This chain is Integration host factor subunit alpha, found in Bdellovibrio bacteriovorus (strain ATCC 15356 / DSM 50701 / NCIMB 9529 / HD100).